Consider the following 872-residue polypeptide: DNA mismatch repair protein MutS (872 aa).

622-629 (GPNMAGKS) lines the ATP pocket.

Belongs to the DNA mismatch repair MutS family.

Functionally, this protein is involved in the repair of mismatches in DNA. It is possible that it carries out the mismatch recognition step. This protein has a weak ATPase activity. The sequence is that of DNA mismatch repair protein MutS from Geobacter metallireducens (strain ATCC 53774 / DSM 7210 / GS-15).